The chain runs to 490 residues: Katanin p60 ATPase-containing subunit A-like 1 (490 aa).

Met1 bears the N-acetylmethionine mark. Positions 95-184 (DPAVWPPPVP…DGEMPKFDGA (90 aa)) are disordered. Residues 116-127 (PNREVRPLRKEM) are compositionally biased toward basic and acidic residues. Residues 128–139 (AGVGARGPVGRA) are compositionally biased toward low complexity. Over residues 143 to 169 (SKSEKPSTSRDKDYRARGRDDKGRKNM) the composition is skewed to basic and acidic residues. The residue at position 174 (Ser174) is a Phosphoserine. 248–255 (GPPGTGKT) lines the ATP pocket.

This sequence belongs to the AAA ATPase family. Katanin p60 subunit A1 subfamily. A-like 1 sub-subfamily. As to quaternary structure, interacts with KATNB1 and KATNBL1. Expressed in testis, restricted to Sertoli cells (at protein level).

It is found in the cytoplasm. Its subcellular location is the cytoskeleton. The protein resides in the spindle pole. The protein localises to the spindle. It catalyses the reaction n ATP + n H2O + a microtubule = n ADP + n phosphate + (n+1) alpha/beta tubulin heterodimers.. Functionally, regulates microtubule dynamics in Sertoli cells, a process that is essential for spermiogenesis and male fertility. Severs microtubules in an ATP-dependent manner, promoting rapid reorganization of cellular microtubule arrays. Has microtubule-severing activity in vitro. This is Katanin p60 ATPase-containing subunit A-like 1 from Homo sapiens (Human).